The chain runs to 316 residues: Cuticle collagen 7 (316 aa).

Residues 1-34 (MSSATFLSVMAGLSGIVVFGALISVFHIYSDINS) form the signal peptide. 2 disordered regions span residues 78-269 (KQSQ…DAAY) and 281-316 (HRNV…HVQA). Residues 79–90 (QSQCNCGQQASN) show a composition bias toward polar residues. Triple-helical region stretches follow at residues 94–126 (GPPG…AGPS), 139–198 (GLPG…PGKS), and 204–263 (GLPG…DGTP). 3 stretches are compositionally biased toward low complexity: residues 110–125 (QPGQ…VAGP), 137–147 (PQGLPGPAGVP), and 177–198 (AGSA…PGKS). Pro residues predominate over residues 209–221 (SGAPGPQGPPGAP). The span at 241–260 (PNGQPGHPGQDGQPGAPGND) shows a compositional bias: low complexity.

This sequence belongs to the cuticular collagen family. In terms of assembly, collagen polypeptide chains are complexed within the cuticle by disulfide bonds and other types of covalent cross-links.

In terms of biological role, nematode cuticles are composed largely of collagen-like proteins. The cuticle functions both as an exoskeleton and as a barrier to protect the worm from its environment. The polypeptide is Cuticle collagen 7 (col-7) (Caenorhabditis elegans).